A 233-amino-acid chain; its full sequence is Large ribosomal subunit protein uL1 (233 aa).

This sequence belongs to the universal ribosomal protein uL1 family. In terms of assembly, part of the 50S ribosomal subunit.

In terms of biological role, binds directly to 23S rRNA. The L1 stalk is quite mobile in the ribosome, and is involved in E site tRNA release. Functionally, protein L1 is also a translational repressor protein, it controls the translation of the L11 operon by binding to its mRNA. The polypeptide is Large ribosomal subunit protein uL1 (Rhizobium etli (strain CIAT 652)).